A 282-amino-acid polypeptide reads, in one-letter code: NADPH-dependent 7-cyano-7-deazaguanine reductase (282 aa).

88–90 (IES) provides a ligand contact to substrate. 90–91 (SK) serves as a coordination point for NADPH. Catalysis depends on C190, which acts as the Thioimide intermediate. The active-site Proton donor is D197. A substrate-binding site is contributed by 229-230 (HE). 258–259 (RG) contacts NADPH.

This sequence belongs to the GTP cyclohydrolase I family. QueF type 2 subfamily. Homodimer.

The protein resides in the cytoplasm. It catalyses the reaction 7-aminomethyl-7-carbaguanine + 2 NADP(+) = 7-cyano-7-deazaguanine + 2 NADPH + 3 H(+). Its pathway is tRNA modification; tRNA-queuosine biosynthesis. In terms of biological role, catalyzes the NADPH-dependent reduction of 7-cyano-7-deazaguanine (preQ0) to 7-aminomethyl-7-deazaguanine (preQ1). This chain is NADPH-dependent 7-cyano-7-deazaguanine reductase, found in Escherichia coli (strain K12 / MC4100 / BW2952).